A 203-amino-acid polypeptide reads, in one-letter code: Thymidylate kinase (203 aa).

ATP is bound at residue 10–17 (GIDGAGKS).

This sequence belongs to the thymidylate kinase family.

The enzyme catalyses dTMP + ATP = dTDP + ADP. Phosphorylation of dTMP to form dTDP in both de novo and salvage pathways of dTTP synthesis. This chain is Thymidylate kinase, found in Cupriavidus pinatubonensis (strain JMP 134 / LMG 1197) (Cupriavidus necator (strain JMP 134)).